Here is a 211-residue protein sequence, read N- to C-terminus: Proline-rich 33 kDa extensin-related protein (211 aa).

An N-terminal signal peptide occupies residues 1–14; sequence AILGVAIFAAPSLA. Pro residues-rich tracts occupy residues 25-59 and 82-93; these read PPVY…PVHK and HKPPVYKPPVQK. A disordered region spans residues 25 to 211; sequence PPVYTPPVHK…RHPPVENTGN (187 aa). Composition is skewed to basic residues over residues 101–111 and 127–139; these read PVHKPPIHKPP and PIHK…RPPV. 2 stretches are compositionally biased toward basic and acidic residues: residues 142-159 and 167-177; these read PPTE…EHKP and KTEKPVPEHKP. Positions 179-198 are enriched in pro residues; it reads HLPPIVVRPPPTHKPNPPYG.

This sequence belongs to the plant proline-rich protein superfamily. ENOD12 family.

Its subcellular location is the secreted. The protein resides in the cell wall. This is Proline-rich 33 kDa extensin-related protein from Daucus carota (Wild carrot).